The chain runs to 520 residues: EGF domain-specific O-linked N-acetylglucosamine transferase (520 aa).

The first 16 residues, 1-16, serve as a signal peptide directing secretion; that stretch reads MPILPILIGILHLSLA. Asparagine 52, asparagine 176, and asparagine 250 each carry an N-linked (GlcNAc...) asparagine glycan. The short motif at 292 to 294 is the Required for optimal activity element; the sequence is DVE. Residue asparagine 479 is glycosylated (N-linked (GlcNAc...) asparagine). Positions 517-520 match the Prevents secretion from ER motif; sequence RNEL.

A divalent metal cation serves as cofactor.

The protein resides in the endoplasmic reticulum lumen. It catalyses the reaction L-seryl-[protein] + UDP-N-acetyl-alpha-D-glucosamine = 3-O-(N-acetyl-beta-D-glucosaminyl)-L-seryl-[protein] + UDP + H(+). The catalysed reaction is L-threonyl-[protein] + UDP-N-acetyl-alpha-D-glucosamine = 3-O-(N-acetyl-beta-D-glucosaminyl)-L-threonyl-[protein] + UDP + H(+). Functionally, catalyzes the transfer of a single N-acetylglucosamine from UDP-GlcNAc to a serine or threonine residue in extracellular proteins resulting in their modification with a beta-linked N-acetylglucosamine (O-GlcNAc). Specifically glycosylates the Thr residue located between the fifth and sixth conserved cysteines of folded EGF-like domains. Involved in epithelial cell adhesion/interaction with the extracellular matrix by mediating glycosylation of proteins in the secretory pathway, such as Dumpy (Dp). The chain is EGF domain-specific O-linked N-acetylglucosamine transferase (Eogt) from Drosophila melanogaster (Fruit fly).